Consider the following 1099-residue polypeptide: DNA-directed RNA polymerase subunit beta (1099 aa).

This sequence belongs to the RNA polymerase beta chain family. As to quaternary structure, in plastids the minimal PEP RNA polymerase catalytic core is composed of four subunits: alpha, beta, beta', and beta''. When a (nuclear-encoded) sigma factor is associated with the core the holoenzyme is formed, which can initiate transcription.

Its subcellular location is the plastid. It localises to the chloroplast. The enzyme catalyses RNA(n) + a ribonucleoside 5'-triphosphate = RNA(n+1) + diphosphate. Its function is as follows. DNA-dependent RNA polymerase catalyzes the transcription of DNA into RNA using the four ribonucleoside triphosphates as substrates. This chain is DNA-directed RNA polymerase subunit beta, found in Bigelowiella natans (Pedinomonas minutissima).